A 481-amino-acid chain; its full sequence is Rho GTPase-activating protein 15 (481 aa).

Residues S51, S111, S204, S207, and S249 each carry the phosphoserine modification. One can recognise a PH domain in the interval 87–197; it reads MVEKEGYLQK…WFQAIKNAID (111 aa). In terms of domain architecture, Rho-GAP spans 287–476; the sequence is SHLHTVCERE…FMLTEYDKIF (190 aa).

Its subcellular location is the cytoplasm. The protein resides in the membrane. Its function is as follows. GTPase activator for the Rho-type GTPases by converting them to an inactive GDP-bound state. Has activity toward RAC1. Overexpression results in an increase in actin stress fibers and cell contraction. This Mus musculus (Mouse) protein is Rho GTPase-activating protein 15 (Arhgap15).